Consider the following 608-residue polypeptide: Protoheme IX farnesyltransferase (608 aa).

Positions 1–304 (MKTPAWSRLA…VFLATSALER (304 aa)) are COX15/CtaA. 17 helical membrane-spanning segments follow: residues 10–30 (AGYAWGVLLWNVLVALFGAYV), 67–87 (ATSGLAFLSVLALFLWALRAF), 99–119 (LALFFMVTESLVGASLVLFGW), 139–159 (TYFLLAALALTAWWASGGGPL), 167–187 (VGLALFLGLLALLFLGMSGAV), 220–240 (VLHPLIAVSVGLYVVFAGYLV), 252–272 (LAQGLAYLYGAQLLAGLINVA), 277–297 (VWMQILHLLLAYAVWLLFVFL), 338–357 (VISLLLFTALFGALIAAKGW), 362–384 (VFLAVALGGYMMAGAANAINMVV), 411–431 (LLFAFALAVLGFAVLWWGANL), 432–452 (LAATLALMGLIWYVLVYTLYL), 460–480 (IVIGGAAGAFPPLVGWAAVTG), 488–508 (YLFALIFFWTPVHFWALALMI), 530–550 (VIQIALYALLTALISLMPLLL), 555–575 (LLYLAASLLLNALLLLKSLAL), and 584–604 (AVSLYKYSMLYLALLFAAMAV). Positions 339–606 (ISLLLFTALF…LLFAAMAVDR (268 aa)) are protoheme IX prenyltransferase.

In the N-terminal section; belongs to the COX15/CtaA family. It in the C-terminal section; belongs to the UbiA prenyltransferase family. Protoheme IX farnesyltransferase subfamily.

Its subcellular location is the cell inner membrane. It carries out the reaction heme b + (2E,6E)-farnesyl diphosphate + H2O = Fe(II)-heme o + diphosphate. It functions in the pathway porphyrin-containing compound metabolism; heme O biosynthesis; heme O from protoheme: step 1/1. Its function is as follows. Converts heme B (protoheme IX) to heme O by substitution of the vinyl group on carbon 2 of heme B porphyrin ring with a hydroxyethyl farnesyl side group. This is Protoheme IX farnesyltransferase (ctaB) from Thermus thermophilus (strain ATCC BAA-163 / DSM 7039 / HB27).